Here is a 276-residue protein sequence, read N- to C-terminus: S-adenosylmethionine-dependent nucleotide dehydratase (276 aa).

The 211-residue stretch at Thr-6–Ile-216 folds into the Radical SAM core domain. Residues Cys-22, Cys-26, and Cys-29 each contribute to the [4Fe-4S] cluster site.

It belongs to the radical SAM superfamily. Viperin family. [4Fe-4S] cluster serves as cofactor.

The enzyme catalyses CTP + AH2 + S-adenosyl-L-methionine = 3'-deoxy-3',4'-didehydro-CTP + 5'-deoxyadenosine + L-methionine + A + H2O + H(+). Its function is as follows. Expression of pVip50 in E.coli (strain MG1655) confers resistance to phage P1; has no effect against T7. Catalyzes the conversion of cytosine triphosphate (CTP) to 3'-deoxy-3',4'-didehydro-CTP (ddhCTP), probably via a SAM-dependent radical mechanism. The modified nucleotide represses transcription from T7 RNA polymerase-directed genes (possibly by acting as chain terminators), strongly suggesting these nucleotides block viral polymerase transcription. How this protein allows bacteria to resist viruses that do not encode their own RNA polymerase (such as lambda, P1) is unknown. In Thermoplasmatales archaeon (strain ISO4-H5), this protein is S-adenosylmethionine-dependent nucleotide dehydratase.